A 572-amino-acid polypeptide reads, in one-letter code: Proline--tRNA ligase (572 aa).

Belongs to the class-II aminoacyl-tRNA synthetase family. ProS type 1 subfamily. As to quaternary structure, homodimer.

The protein localises to the cytoplasm. The catalysed reaction is tRNA(Pro) + L-proline + ATP = L-prolyl-tRNA(Pro) + AMP + diphosphate. In terms of biological role, catalyzes the attachment of proline to tRNA(Pro) in a two-step reaction: proline is first activated by ATP to form Pro-AMP and then transferred to the acceptor end of tRNA(Pro). As ProRS can inadvertently accommodate and process non-cognate amino acids such as alanine and cysteine, to avoid such errors it has two additional distinct editing activities against alanine. One activity is designated as 'pretransfer' editing and involves the tRNA(Pro)-independent hydrolysis of activated Ala-AMP. The other activity is designated 'posttransfer' editing and involves deacylation of mischarged Ala-tRNA(Pro). The misacylated Cys-tRNA(Pro) is not edited by ProRS. This chain is Proline--tRNA ligase, found in Psychrobacter cryohalolentis (strain ATCC BAA-1226 / DSM 17306 / VKM B-2378 / K5).